A 341-amino-acid polypeptide reads, in one-letter code: Phenylalanine--tRNA ligase alpha subunit (341 aa).

Glu-255 serves as a coordination point for Mg(2+).

This sequence belongs to the class-II aminoacyl-tRNA synthetase family. Phe-tRNA synthetase alpha subunit type 1 subfamily. As to quaternary structure, tetramer of two alpha and two beta subunits. Requires Mg(2+) as cofactor.

It localises to the cytoplasm. It catalyses the reaction tRNA(Phe) + L-phenylalanine + ATP = L-phenylalanyl-tRNA(Phe) + AMP + diphosphate + H(+). This chain is Phenylalanine--tRNA ligase alpha subunit, found in Natranaerobius thermophilus (strain ATCC BAA-1301 / DSM 18059 / JW/NM-WN-LF).